The following is a 521-amino-acid chain: ATP synthase subunit beta (521 aa).

Composition is skewed to low complexity over residues 1–21 (MAKA…AAKA) and 28–42 (PKTT…TKSG). Residues 1 to 42 (MAKAATPKTTAAAEAKPAAKAPAKKAAPKTTAAAKPAATKSG) are disordered. 199–206 (GGAGVGKT) provides a ligand contact to ATP.

Belongs to the ATPase alpha/beta chains family. F-type ATPases have 2 components, CF(1) - the catalytic core - and CF(0) - the membrane proton channel. CF(1) has five subunits: alpha(3), beta(3), gamma(1), delta(1), epsilon(1). CF(0) has three main subunits: a(1), b(2) and c(9-12). The alpha and beta chains form an alternating ring which encloses part of the gamma chain. CF(1) is attached to CF(0) by a central stalk formed by the gamma and epsilon chains, while a peripheral stalk is formed by the delta and b chains.

Its subcellular location is the cell inner membrane. The enzyme catalyses ATP + H2O + 4 H(+)(in) = ADP + phosphate + 5 H(+)(out). In terms of biological role, produces ATP from ADP in the presence of a proton gradient across the membrane. The catalytic sites are hosted primarily by the beta subunits. The polypeptide is ATP synthase subunit beta (Brucella abortus (strain 2308)).